Consider the following 229-residue polypeptide: UPF0488 protein C8orf33 (229 aa).

A compositionally biased stretch (low complexity) spans 1 to 16 (MAALGHLAGEAAAAPG). Residues 1–96 (MAALGHLAGE…GEKASEKLAP (96 aa)) form a disordered region. A2 is modified (N-acetylalanine). R27 is subject to Omega-N-methylarginine. Residues 69 to 79 (KKQKNKKKTRN) show a composition bias toward basic residues. S82 bears the Phosphoserine mark.

The protein belongs to the UPF0488 family.

This is UPF0488 protein C8orf33 (C8orf33) from Homo sapiens (Human).